Reading from the N-terminus, the 284-residue chain is 2-dehydro-3-deoxyphosphooctonate aldolase (284 aa).

It belongs to the KdsA family.

Its subcellular location is the cytoplasm. The catalysed reaction is D-arabinose 5-phosphate + phosphoenolpyruvate + H2O = 3-deoxy-alpha-D-manno-2-octulosonate-8-phosphate + phosphate. It functions in the pathway carbohydrate biosynthesis; 3-deoxy-D-manno-octulosonate biosynthesis; 3-deoxy-D-manno-octulosonate from D-ribulose 5-phosphate: step 2/3. Its pathway is bacterial outer membrane biogenesis; lipopolysaccharide biosynthesis. The polypeptide is 2-dehydro-3-deoxyphosphooctonate aldolase (Pectobacterium carotovorum subsp. carotovorum (strain PC1)).